Consider the following 163-residue polypeptide: Arginine repressor (163 aa).

The protein belongs to the ArgR family.

It localises to the cytoplasm. It participates in amino-acid biosynthesis; L-arginine biosynthesis [regulation]. Regulates arginine biosynthesis genes. The protein is Arginine repressor of Corynebacterium diphtheriae (strain ATCC 700971 / NCTC 13129 / Biotype gravis).